Here is a 24-residue protein sequence, read N- to C-terminus: Brevinin-1JDb (24 aa).

Cysteines 18 and 24 form a disulfide.

As to expression, expressed by the skin glands.

The protein localises to the secreted. Functionally, has antibacterial activity against E.coli and S.aureus strains. Has antifungal activity against C.albicans. Has hemolytic activity against rabbit erythrocytes. This chain is Brevinin-1JDb, found in Odorrana jingdongensis (Jingdong frog).